We begin with the raw amino-acid sequence, 502 residues long: Maturase K (502 aa).

It belongs to the intron maturase 2 family. MatK subfamily.

The protein resides in the plastid. Its subcellular location is the chloroplast. Functionally, usually encoded in the trnK tRNA gene intron. Probably assists in splicing its own and other chloroplast group II introns. The protein is Maturase K of Arabis blepharophylla (Coast rock-cress).